The following is a 534-amino-acid chain: CTP synthase (534 aa).

Positions 1–265 are amidoligase domain; the sequence is MKYIIVTGGV…TTQLMKHLQL (265 aa). Ser12 provides a ligand contact to CTP. Ser12 is a binding site for UTP. An ATP-binding site is contributed by 13–18; it reads GLGKGI. Tyr53 contributes to the L-glutamine binding site. Residue Asp70 coordinates ATP. Positions 70 and 140 each coordinate Mg(2+). CTP contacts are provided by residues 147–149, 186–191, and Lys222; these read DIE and KTKPSQ. UTP contacts are provided by residues 186–191 and Lys222; that span reads KTKPSQ. In terms of domain architecture, Glutamine amidotransferase type-1 spans 289-530; it reads KLAIVGKYTN…VAAMCKYRKE (242 aa). An L-glutamine-binding site is contributed by Gly352. The Nucleophile; for glutamine hydrolysis role is filled by Cys379. L-glutamine-binding positions include 380–383, Glu403, and Arg460; that span reads LGMQ. Active-site residues include His503 and Glu505.

The protein belongs to the CTP synthase family. As to quaternary structure, homotetramer.

It carries out the reaction UTP + L-glutamine + ATP + H2O = CTP + L-glutamate + ADP + phosphate + 2 H(+). The catalysed reaction is L-glutamine + H2O = L-glutamate + NH4(+). The enzyme catalyses UTP + NH4(+) + ATP = CTP + ADP + phosphate + 2 H(+). It participates in pyrimidine metabolism; CTP biosynthesis via de novo pathway; CTP from UDP: step 2/2. With respect to regulation, allosterically activated by GTP, when glutamine is the substrate; GTP has no effect on the reaction when ammonia is the substrate. The allosteric effector GTP functions by stabilizing the protein conformation that binds the tetrahedral intermediate(s) formed during glutamine hydrolysis. Inhibited by the product CTP, via allosteric rather than competitive inhibition. Its function is as follows. Catalyzes the ATP-dependent amination of UTP to CTP with either L-glutamine or ammonia as the source of nitrogen. Regulates intracellular CTP levels through interactions with the four ribonucleotide triphosphates. The chain is CTP synthase from Methanosarcina barkeri (strain Fusaro / DSM 804).